A 134-amino-acid chain; its full sequence is Translation initiation factor 2 subunit beta (134 aa).

This sequence belongs to the eIF-2-beta/eIF-5 family. In terms of assembly, heterotrimer composed of an alpha, a beta and a gamma chain.

Functionally, eIF-2 functions in the early steps of protein synthesis by forming a ternary complex with GTP and initiator tRNA. In Pyrobaculum calidifontis (strain DSM 21063 / JCM 11548 / VA1), this protein is Translation initiation factor 2 subunit beta.